The following is a 342-amino-acid chain: Dihydroorotase (342 aa).

Zn(2+) contacts are provided by H13 and H15. Residues 15–17 (HLR) and N41 contribute to the substrate site. Zn(2+) is bound by residues K98, H135, and H173. K98 is subject to N6-carboxylysine. H135 contributes to the substrate binding site. L218 lines the substrate pocket. D246 contributes to the Zn(2+) binding site. Residue D246 is part of the active site. Residues H250 and A262 each contribute to the substrate site.

The protein belongs to the metallo-dependent hydrolases superfamily. DHOase family. Class II DHOase subfamily. In terms of assembly, homodimer. Requires Zn(2+) as cofactor.

The enzyme catalyses (S)-dihydroorotate + H2O = N-carbamoyl-L-aspartate + H(+). It functions in the pathway pyrimidine metabolism; UMP biosynthesis via de novo pathway; (S)-dihydroorotate from bicarbonate: step 3/3. Its function is as follows. Catalyzes the reversible cyclization of carbamoyl aspartate to dihydroorotate. The protein is Dihydroorotase of Vibrio vulnificus (strain CMCP6).